The following is a 511-amino-acid chain: Vesicular acetylcholine transporter (511 aa).

Over 1 to 36 the chain is Cytoplasmic; the sequence is MAVGQAKAAMGKISSAIGERSKRISGAMNEPRRKRK. A helical membrane pass occupies residues 37–57; that stretch reads ILLVIVCIAMLLDNMLYMVIV. At 58-108 the chain is on the lumenal, vesicle side; sequence PIIPNYLETIRTYKLVYITTPSNGTNGSLLNSTQRAVLERNPNANEDIQIG. 3 N-linked (GlcNAc...) asparagine glycosylation sites follow: asparagine 80, asparagine 83, and asparagine 88. The chain crosses the membrane as a helical span at residues 109 to 129; the sequence is VLFASKAILQLLSNPFTGTFI. The Cytoplasmic portion of the chain corresponds to 130 to 135; that stretch reads DRVGYD. Residues 136 to 156 traverse the membrane as a helical segment; that stretch reads IPLLIGLTIMFFSTITFAFGE. Over 157–165 the chain is Lumenal, vesicle; sequence SYAILFAAR. The chain crosses the membrane as a helical span at residues 166-186; sequence SLQGLGSAFADTSGIAMIADK. Topologically, residues 187-197 are cytoplasmic; sequence YTEESERTQAL. The chain crosses the membrane as a helical span at residues 198–218; the sequence is GIALAFISFGSLVAPPFGGVL. Over 219 to 225 the chain is Lumenal, vesicle; sequence YQFAGKW. The chain crosses the membrane as a helical span at residues 226 to 246; sequence VPFLVLSFVCLLDGILLLMVV. Over 247-267 the chain is Cytoplasmic; it reads TPFASRTRVNTLQGTPIYKLM. A helical transmembrane segment spans residues 268–288; the sequence is IDPYIAVVAGALTTCNIPLAF. Topologically, residues 289 to 306 are lumenal, vesicle; sequence LEPTISNWMKKTMNASEW. N-linked (GlcNAc...) asparagine glycosylation is present at asparagine 302. A helical transmembrane segment spans residues 307 to 327; the sequence is QMGITWLPAFFPHILGVYITV. Residues 328–337 are Cytoplasmic-facing; that stretch reads KLAAKYPNYQ. The chain crosses the membrane as a helical span at residues 338-358; that stretch reads WLYGAVGLVIIGASSCTIPAC. The Lumenal, vesicle portion of the chain corresponds to 359-363; it reads RNFEE. A helical membrane pass occupies residues 364 to 384; that stretch reads LIIPLCALCFGIALVDTALLP. The Cytoplasmic portion of the chain corresponds to 385 to 400; that stretch reads TLAFLVDIRYVSVYGS. The helical transmembrane segment at 401–421 threads the bilayer; the sequence is VYAIADISYSVAYALGPIMAG. Topologically, residues 422–428 are lumenal, vesicle; the sequence is QIVHDLG. The chain crosses the membrane as a helical span at residues 429–449; that stretch reads FVQLNLGMGLVNILYAPGLLF. The Cytoplasmic segment spans residues 450-511; that stretch reads LRNVCQMKPS…VLSDQEGYSE (62 aa). The tract at residues 485 to 511 is disordered; it reads EAKEPHGTSSGNHSVHAVLSDQEGYSE.

Belongs to the major facilitator superfamily. Vesicular transporter family. In terms of tissue distribution, high expression in the electric lobe of the brain.

It is found in the membrane. Involved in acetylcholine transport into synaptic vesicles. The chain is Vesicular acetylcholine transporter from Torpedo marmorata (Marbled electric ray).